Here is a 433-residue protein sequence, read N- to C-terminus: Oxaloacetate decarboxylase beta chain 2 (433 aa).

Helical transmembrane passes span 13-35 (LMHL…WLAI), 42-64 (LLLL…LALT), 125-147 (LFYK…VGAM), 160-182 (LLLG…TLNY), 214-236 (LAPE…VPLI), 266-288 (ILFP…PLLG), 308-327 (TVQN…SVGA), 339-361 (TLGI…VLMA), and 413-432 (VAGV…YVLA).

This sequence belongs to the GcdB/MmdB/OadB family. Heterotrimer of an alpha, a beta and a gamma subunit. Na(+) serves as cofactor.

The protein localises to the cell membrane. The catalysed reaction is oxaloacetate + 2 Na(+)(in) + H(+) = pyruvate + 2 Na(+)(out) + CO2. Catalyzes the decarboxylation of oxaloacetate coupled to Na(+) translocation. This chain is Oxaloacetate decarboxylase beta chain 2 (oadB2), found in Salmonella typhimurium (strain LT2 / SGSC1412 / ATCC 700720).